The primary structure comprises 147 residues: MVHLTGEEKAAVTALWGKVNVDEVGGEALGRLLVVYPWTQRFFESFGDLSTPDAVMSNPKVKAHGKKVLGAFSDGLAHLDNLKGTFAQLSELHCDKLHVDPENFRLLGNVLVCVLAHHFGKEFTPQLQAAYQKVVAGVANALAHKYH.

Val-2 bears the N-acetylvaline mark. The Globin domain maps to 3–147 (HLTGEEKAAV…VANALAHKYH (145 aa)). At Thr-13 the chain carries Phosphothreonine. The residue at position 45 (Ser-45) is a Phosphoserine. Lys-60 is subject to N6-acetyllysine. Heme b is bound at residue His-64. The residue at position 83 (Lys-83) is an N6-acetyllysine. His-93 serves as a coordination point for heme b. At Cys-94 the chain carries S-nitrosocysteine. At Lys-145 the chain carries N6-acetyllysine.

This sequence belongs to the globin family. In terms of assembly, heterotetramer of two alpha chains and two beta chains. Red blood cells.

Its function is as follows. Involved in oxygen transport from the lung to the various peripheral tissues. The protein is Hemoglobin subunit beta (HBB) of Ateles belzebuth (White-bellied spider monkey).